The sequence spans 259 residues: Ubiquitin-conjugating enzyme E2 J2 (259 aa).

The Cytoplasmic portion of the chain corresponds to 1–226; sequence MSNNSNKRAP…AGLPQANRHH (226 aa). The UBC core domain maps to 12-162; that stretch reads TATQRLKQDY…DKVFCELFPE (151 aa). Cys94 functions as the Glycyl thioester intermediate in the catalytic mechanism. A helical; Anchor for type IV membrane protein membrane pass occupies residues 227–247; sequence GLLGGALANLFVIVGFAAFAY. Residues 248–259 are Lumenal-facing; it reads TVKYVLRSIAQE.

This sequence belongs to the ubiquitin-conjugating enzyme family. Interacts with murid herpesvirus 4 protein K3 (mK3).

The protein resides in the endoplasmic reticulum membrane. It catalyses the reaction S-ubiquitinyl-[E1 ubiquitin-activating enzyme]-L-cysteine + [E2 ubiquitin-conjugating enzyme]-L-cysteine = [E1 ubiquitin-activating enzyme]-L-cysteine + S-ubiquitinyl-[E2 ubiquitin-conjugating enzyme]-L-cysteine.. Its pathway is protein modification; protein ubiquitination. Its function is as follows. Catalyzes the covalent attachment of ubiquitin to other proteins. Seems to function in the selective degradation of misfolded membrane proteins from the endoplasmic reticulum (ERAD). In cooperation with the GATOR2 complex, catalyzes 'Lys-6'-linked ubiquitination of NPRL2. In case of infection by the murid herpesvirus 4, its association with the viral E3 ligase K3 mediates ubiquitination of host surface class I (MHC-I) H-2D(b)/H2-D1 and H-2K(b)/H2-K1 molecules before they exit the endoplasmic reticulum, leading to their degradation by the ERAD system, thus blocking the immune detection of virus-infected cells. The complex formed with the murid herpesvirus 4 protein K3 mediates ubiquitination of lysine, as well as serine and threonine residues present in the cytoplasmic tail of surface class I molecules and promotes ubiquitination of hydroxylated serine or threonine residues via ester bonds instead of the classical isopeptide linkage. The protein is Ubiquitin-conjugating enzyme E2 J2 (Ube2j2) of Mus musculus (Mouse).